A 316-amino-acid chain; its full sequence is Putative transketolase C-terminal section (316 aa).

Belongs to the transketolase family. The cofactor is thiamine diphosphate.

The catalysed reaction is D-sedoheptulose 7-phosphate + D-glyceraldehyde 3-phosphate = aldehydo-D-ribose 5-phosphate + D-xylulose 5-phosphate. In Methanocaldococcus jannaschii (strain ATCC 43067 / DSM 2661 / JAL-1 / JCM 10045 / NBRC 100440) (Methanococcus jannaschii), this protein is Putative transketolase C-terminal section.